The following is a 343-amino-acid chain: Anthranilate phosphoribosyltransferase (343 aa).

5-phospho-alpha-D-ribose 1-diphosphate contacts are provided by residues glycine 84, 87-88 (GD), threonine 92, 94-97 (NIST), 112-120 (KHGNRSASS), and serine 124. An anthranilate-binding site is contributed by glycine 84. Serine 96 serves as a coordination point for Mg(2+). Asparagine 115 serves as a coordination point for anthranilate. Residue arginine 170 participates in anthranilate binding. Mg(2+) contacts are provided by aspartate 229 and glutamate 230.

This sequence belongs to the anthranilate phosphoribosyltransferase family. In terms of assembly, homodimer. The cofactor is Mg(2+).

The catalysed reaction is N-(5-phospho-beta-D-ribosyl)anthranilate + diphosphate = 5-phospho-alpha-D-ribose 1-diphosphate + anthranilate. The protein operates within amino-acid biosynthesis; L-tryptophan biosynthesis; L-tryptophan from chorismate: step 2/5. Functionally, catalyzes the transfer of the phosphoribosyl group of 5-phosphorylribose-1-pyrophosphate (PRPP) to anthranilate to yield N-(5'-phosphoribosyl)-anthranilate (PRA). The protein is Anthranilate phosphoribosyltransferase of Bordetella pertussis (strain Tohama I / ATCC BAA-589 / NCTC 13251).